A 690-amino-acid chain; its full sequence is Elongation factor G (690 aa).

Residues 8-283 enclose the tr-type G domain; the sequence is SKCRNIGIMA…AVVDYLPSPN (276 aa). Residues 17 to 24, 81 to 85, and 135 to 138 contribute to the GTP site; these read AHIDAGKT, DTPGH, and NKMD.

It belongs to the TRAFAC class translation factor GTPase superfamily. Classic translation factor GTPase family. EF-G/EF-2 subfamily.

Its subcellular location is the cytoplasm. Its function is as follows. Catalyzes the GTP-dependent ribosomal translocation step during translation elongation. During this step, the ribosome changes from the pre-translocational (PRE) to the post-translocational (POST) state as the newly formed A-site-bound peptidyl-tRNA and P-site-bound deacylated tRNA move to the P and E sites, respectively. Catalyzes the coordinated movement of the two tRNA molecules, the mRNA and conformational changes in the ribosome. In Anaplasma phagocytophilum (strain HZ), this protein is Elongation factor G.